The primary structure comprises 427 residues: Histidine--tRNA ligase (427 aa).

Belongs to the class-II aminoacyl-tRNA synthetase family. Homodimer.

The protein localises to the cytoplasm. The catalysed reaction is tRNA(His) + L-histidine + ATP = L-histidyl-tRNA(His) + AMP + diphosphate + H(+). This Deinococcus radiodurans (strain ATCC 13939 / DSM 20539 / JCM 16871 / CCUG 27074 / LMG 4051 / NBRC 15346 / NCIMB 9279 / VKM B-1422 / R1) protein is Histidine--tRNA ligase.